An 815-amino-acid chain; its full sequence is Protein SMAX1-LIKE 3 (815 aa).

The 164-residue stretch at 8 to 171 folds into the Clp R domain; that stretch reads VEQALTADAA…TKVEQAVSLE (164 aa). Repeat stretches follow at residues 12–80 and 99–171; these read LTAD…LNRL and ISNA…VSLE. A disordered region spans residues 750 to 769; that stretch reads SRACSPPSNQKSDGSDQPED. The short motif at 778–782 is the EAR element; that stretch reads LDLNL.

The protein belongs to the ClpA/ClpB family. In terms of assembly, interacts probably with TPL/TPR in an EAR-motif dependent manner. Expressed in roots and seedlings.

In terms of biological role, may function in a transcriptional corepressor complex. In Arabidopsis thaliana (Mouse-ear cress), this protein is Protein SMAX1-LIKE 3.